The following is a 64-amino-acid chain: Small ribosomal subunit protein bS21 (64 aa).

Residues 39–64 are disordered; sequence EKPSVKRKKKALAAKKRAVKKARKSF. Over residues 43 to 64 the composition is skewed to basic residues; that stretch reads VKRKKKALAAKKRAVKKARKSF.

The protein belongs to the bacterial ribosomal protein bS21 family.

The sequence is that of Small ribosomal subunit protein bS21 (rpsU) from Myxococcus xanthus.